The primary structure comprises 207 residues: MDLNIKSLAGAEAGVVGVAEGVFAADYNESLIHQVVVAYMAGARQGTKAQKTRSEVSGGGAKPWRQKGTGRARAGTIRSPIFRKGGVTFAAKPKSYKQKVNRKMYSGAVKSILSELVRSDRMTVVESLRLETPKTKEFKVIVDSLGVKDVLFVVGVEEFNENLYLSSRNLKNVAVCDSVEINPVSLVCFENVVFTKQAIKEIEEKLV.

Positions 48–70 (KAQKTRSEVSGGGAKPWRQKGTG) are disordered.

It belongs to the universal ribosomal protein uL4 family. In terms of assembly, part of the 50S ribosomal subunit.

In terms of biological role, one of the primary rRNA binding proteins, this protein initially binds near the 5'-end of the 23S rRNA. It is important during the early stages of 50S assembly. It makes multiple contacts with different domains of the 23S rRNA in the assembled 50S subunit and ribosome. Forms part of the polypeptide exit tunnel. The sequence is that of Large ribosomal subunit protein uL4 from Francisella philomiragia subsp. philomiragia (strain ATCC 25017 / CCUG 19701 / FSC 153 / O#319-036).